Here is a 156-residue protein sequence, read N- to C-terminus: Ribosomal RNA large subunit methyltransferase H (156 aa).

S-adenosyl-L-methionine is bound by residues Leu73, Gly104, and 123 to 128 (LSALTL).

Belongs to the RNA methyltransferase RlmH family. In terms of assembly, homodimer.

The protein localises to the cytoplasm. The enzyme catalyses pseudouridine(1915) in 23S rRNA + S-adenosyl-L-methionine = N(3)-methylpseudouridine(1915) in 23S rRNA + S-adenosyl-L-homocysteine + H(+). Its function is as follows. Specifically methylates the pseudouridine at position 1915 (m3Psi1915) in 23S rRNA. The polypeptide is Ribosomal RNA large subunit methyltransferase H (Shewanella sp. (strain MR-7)).